Here is a 394-residue protein sequence, read N- to C-terminus: Acetyl-CoA acetyltransferase (394 aa).

Catalysis depends on C89, which acts as the Acyl-thioester intermediate. Residues H350 and C380 each act as proton acceptor in the active site.

It belongs to the thiolase-like superfamily. Thiolase family. As to quaternary structure, homotetramer.

It localises to the cytoplasm. It catalyses the reaction 2 acetyl-CoA = acetoacetyl-CoA + CoA. It participates in biopolymer metabolism; poly-(R)-3-hydroxybutanoate biosynthesis. The protein operates within metabolic intermediate biosynthesis; (R)-mevalonate biosynthesis; (R)-mevalonate from acetyl-CoA: step 1/3. This Thiocystis violacea protein is Acetyl-CoA acetyltransferase.